We begin with the raw amino-acid sequence, 344 residues long: MRKLFLDAFGEKKLDKPPVWIMRQAGRYLPEYRAVRAKFDNFMDMCRNADACCEVALHPLQRYDLDAAIVFSDILTIPEAMGMDLKFIKGTGPVFSEPIQSQKDLDKLKSIEDSIGSLDYVYNAVKTTSSTINVPLIGFTGSPWTLAAYMIEGSGSKQFNKLRKMMYANPQLMHSLLQRLADITIIYLLEQVKAGASCVMIFDTWGGILPLEHYKNFSLKYMEYIAKNVKQKINIPIVFFTKGGSNFFEEIKDKSCDGVGVDWSVTLKQARHRIGVGKVLQGNFDPAFLYGSKQSIRETVRANIEFIQSDKLNNYIVNLGHGIYPDIDPDSVRVMIDAIREFSA.

Substrate contacts are provided by residues 23–27, D73, Y149, T204, and H321; that span reads RQAGR.

It belongs to the uroporphyrinogen decarboxylase family. As to quaternary structure, homodimer.

It is found in the cytoplasm. The enzyme catalyses uroporphyrinogen III + 4 H(+) = coproporphyrinogen III + 4 CO2. It functions in the pathway porphyrin-containing compound metabolism; protoporphyrin-IX biosynthesis; coproporphyrinogen-III from 5-aminolevulinate: step 4/4. Functionally, catalyzes the decarboxylation of four acetate groups of uroporphyrinogen-III to yield coproporphyrinogen-III. The sequence is that of Uroporphyrinogen decarboxylase from Francisella tularensis subsp. novicida (strain U112).